Here is a 441-residue protein sequence, read N- to C-terminus: Xaa-Pro aminopeptidase (441 aa).

Residues Asp-261, Asp-272, His-355, Glu-384, and Glu-407 each coordinate Mn(2+).

Belongs to the peptidase M24B family. As to quaternary structure, homotetramer. Mn(2+) serves as cofactor.

The protein localises to the cytoplasm. It carries out the reaction Release of any N-terminal amino acid, including proline, that is linked to proline, even from a dipeptide or tripeptide.. The protein is Xaa-Pro aminopeptidase (pepP) of Escherichia coli (strain K12).